The primary structure comprises 794 residues: Signal transducer and activator of transcription 5A (794 aa).

Y90 bears the Phosphotyrosine mark. Position 128 is a phosphoserine (S128). The 98-residue stretch at 589–686 folds into the SH2 domain; it reads WNDGAILGFV…EVFSKYYTPV (98 aa). Y682 carries the phosphotyrosine modification. Y694 bears the Phosphotyrosine; by JAK2 mark. A disordered region spans residues 771–794; that stretch reads PMDSLEPSLPPPTGLFTPGRGSLS.

It belongs to the transcription factor STAT family. Forms a homodimer or a heterodimer with a related family member. Binds NR3C1. Interacts with NCOA1 and SOCS7. Interacts with ERBB4. Interacts with EBF4. Interacts with CD69. In terms of processing, ISGylated. Post-translationally, tyrosine phosphorylated in response to KITLG/SCF, IL2, IL3, IL7, IL15, CSF2/GMCSF, GH1, PRL, EPO and THPO. Activated KIT promotes phosphorylation on tyrosine residues and subsequent translocation to the nucleus. Tyrosine phosphorylated in response to constitutively activated FGFR1, FGFR2, FGFR3 and FGFR4. Tyrosine phosphorylation is required for DNA-binding activity and dimerization. Serine phosphorylation is also required for maximal transcriptional activity. Tyrosine phosphorylated in response to signaling via activated FLT3; wild-type FLT3 results in much weaker phosphorylation than constitutively activated mutant FLT3. Alternatively, can be phosphorylated by JAK2 at Tyr-694.

The protein resides in the cytoplasm. Its subcellular location is the nucleus. Its function is as follows. Carries out a dual function: signal transduction and activation of transcription. Mediates cellular responses to the cytokine KITLG/SCF and other growth factors. May mediate cellular responses to activated FGFR1, FGFR2, FGFR3 and FGFR4. Binds to the GAS element and activates PRL-induced transcription. Regulates the expression of milk proteins during lactation. This chain is Signal transducer and activator of transcription 5A (STAT5A), found in Bos taurus (Bovine).